The sequence spans 123 residues: Large ribosomal subunit protein uL14 (123 aa).

It belongs to the universal ribosomal protein uL14 family. In terms of assembly, part of the 50S ribosomal subunit. Forms a cluster with proteins L3 and L19. In the 70S ribosome, L14 and L19 interact and together make contacts with the 16S rRNA in bridges B5 and B8.

In terms of biological role, binds to 23S rRNA. Forms part of two intersubunit bridges in the 70S ribosome. The chain is Large ribosomal subunit protein uL14 from Aliivibrio salmonicida (strain LFI1238) (Vibrio salmonicida (strain LFI1238)).